The chain runs to 261 residues: Early 31 kDa protein (261 aa).

The interval 230–261 is disordered; sequence INKYSADTDEEEEEEEDNAEDTEEEEEEEADQ. Residues 236 to 261 show a composition bias toward acidic residues; it reads DTDEEEEEEEDNAEDTEEEEEEEADQ.

This is Early 31 kDa protein from Frog virus 3 (isolate Goorha) (FV-3).